Reading from the N-terminus, the 92-residue chain is MVYVLIAYDISNDSKRLKAAQKLLQMGFARVQKSVYIAKGGRSLAKEAYRALQRLADSGKDKIMVMVIPGDSVRDAYGLGGSLEDGKRVVVV.

Aspartate 9 lines the Mg(2+) pocket.

It belongs to the CRISPR-associated endoribonuclease Cas2 protein family. As to quaternary structure, homodimer, forms a heterotetramer with a Cas1 homodimer. Mg(2+) is required as a cofactor.

Its function is as follows. CRISPR (clustered regularly interspaced short palindromic repeat), is an adaptive immune system that provides protection against mobile genetic elements (viruses, transposable elements and conjugative plasmids). CRISPR clusters contain sequences complementary to antecedent mobile elements and target invading nucleic acids. CRISPR clusters are transcribed and processed into CRISPR RNA (crRNA). Functions as a ssRNA-specific endoribonuclease. Involved in the integration of spacer DNA into the CRISPR cassette. In Aeropyrum pernix (strain ATCC 700893 / DSM 11879 / JCM 9820 / NBRC 100138 / K1), this protein is CRISPR-associated endoribonuclease Cas2.